Consider the following 399-residue polypeptide: Calsequestrin-2 (399 aa).

An N-terminal signal peptide occupies residues 1-19; it reads MKRTHLFIVGIYFLSSCRA. Y282 carries the post-translational modification Phosphotyrosine. The N-linked (GlcNAc...) asparagine glycan is linked to N335. A disordered region spans residues 365-399; it reads VLSGKINTEDDDEDDDDDDNSDEEDNDDSDDDDDE. Positions 373 to 399 are enriched in acidic residues; it reads EDDDEDDDDDDNSDEEDNDDSDDDDDE. Phosphoserine occurs at positions 385 and 393.

This sequence belongs to the calsequestrin family. Monomer, homodimer and homooligomer. Mostly monomeric in the absence of calcium. Forms higher oligomers in a calcium-dependent manner. Dimers associate to form tetramers, that then form linear homomer chains. Interacts with ASPH and TRDN. In terms of processing, phosphorylation in the C-terminus, probably by CK2, moderately increases calcium buffering capacity. N-glycosylated.

It localises to the sarcoplasmic reticulum lumen. Calsequestrin is a high-capacity, moderate affinity, calcium-binding protein and thus acts as an internal calcium store in muscle. Calcium ions are bound by clusters of acidic residues at the protein surface, especially at the interface between subunits. Can bind around 60 Ca(2+) ions. Regulates the release of lumenal Ca(2+) via the calcium release channel RYR2; this plays an important role in triggering muscle contraction. Plays a role in excitation-contraction coupling in the heart and in regulating the rate of heart beats. In Homo sapiens (Human), this protein is Calsequestrin-2 (CASQ2).